Consider the following 585-residue polypeptide: MKRLLTVLVVGLVALVSGCAGIPSSSSPQAIGTVERPAPPSLPKPTPDMDPDVLLREFLKATADPANRHLAARQFLTESASSAWDDAGSALLIDRVVFVETRSTDRVSVSMRADILGSLSDLGVFETGEGALPDPGPIELVKTSGGWRIDRLPNGVFLDWQQFQATYKRYTLYFVDPTGTTVVPDPRYVAVSDPDQLATELVSKLIAGPRPEMERSVRNLLDPPLKLRGPVTRADGGKTGVGRGYGGARIDLENLSASDPHSRQLLAAQLIWTLSRAGVAGPYVINVDGAPLDDRFADGWETSDVAATDPGAAPGAAAGLHALVNGSLVSLDGQRAPRVPGAFGQAPHQVSASVSRNGQDAASVVAPPGAPDPAATLWIGPLGGSTVQAMEGRTLSRPSWSLDQAVWVVADGINVVRAIRDASGTPARIPVDSSAVSSRYPGPISDLQLSRDGTRAAMVIEGQVILAGIEQTQDGRFLLTYPRRLGFGLGNSAVSLSWRTGDDIVVSRTDPEHPVSYVNLDGVNSDAPSRNLVMPVSVVAANPSTVYVADQRGVKQLSASADEENSGWVEVSPLMVPGSLPVLPG.

Residues 1–18 (MKRLLTVLVVGLVALVSG) form the signal peptide. The N-palmitoyl cysteine moiety is linked to residue Cys19. The S-diacylglycerol cysteine moiety is linked to residue Cys19. A disordered region spans residues 24-46 (SSSSPQAIGTVERPAPPSLPKPT). Residues 37–46 (PAPPSLPKPT) are compositionally biased toward pro residues.

Belongs to the LpqB lipoprotein family. Interacts with MtrB, probably extracytoplasmically via its sensor domain.

The protein resides in the cell membrane. Its subcellular location is the secreted. It localises to the cell wall. Functionally, may modulate activity of the MtrAB system in controlling homeostasis of the cell wall and cell division. The chain is Lipoprotein LpqB from Mycolicibacterium smegmatis (strain ATCC 700084 / mc(2)155) (Mycobacterium smegmatis).